A 224-amino-acid polypeptide reads, in one-letter code: MRQQENFLESMQSFFPLAATLLGYLIGSLSFAVIVSRVMGLNDPRTFGSKNPGATNVLRSGSKTAAIVTLLLDAAKGWLPVMLVRWYGKPYGMEEGTMALVGLAAFIGHLYPVFFNFAGGKGVATALGVLLGLSPILALATGATWLIMAYFFRYVSLASLTAAVFVPVYYVFGDGMAWYLSKGVLAALCAMSLLLIYRHAENISRLIKGTESRLGKKARTERKS.

5 helical membrane passes run 14–34, 64–84, 98–118, 127–147, and 160–180; these read FFPLAATLLGYLIGSLSFAVI, TAAIVTLLLDAAKGWLPVMLV, MALVGLAAFIGHLYPVFFNFA, LGVLLGLSPILALATGATWLI, and LTAAVFVPVYYVFGDGMAWYL.

Belongs to the PlsY family. In terms of assembly, probably interacts with PlsX.

Its subcellular location is the cell inner membrane. The catalysed reaction is an acyl phosphate + sn-glycerol 3-phosphate = a 1-acyl-sn-glycero-3-phosphate + phosphate. The protein operates within lipid metabolism; phospholipid metabolism. Functionally, catalyzes the transfer of an acyl group from acyl-phosphate (acyl-PO(4)) to glycerol-3-phosphate (G3P) to form lysophosphatidic acid (LPA). This enzyme utilizes acyl-phosphate as fatty acyl donor, but not acyl-CoA or acyl-ACP. This chain is Glycerol-3-phosphate acyltransferase, found in Albidiferax ferrireducens (strain ATCC BAA-621 / DSM 15236 / T118) (Rhodoferax ferrireducens).